A 117-amino-acid chain; its full sequence is Large ribosomal subunit protein bL20 (117 aa).

It belongs to the bacterial ribosomal protein bL20 family.

Binds directly to 23S ribosomal RNA and is necessary for the in vitro assembly process of the 50S ribosomal subunit. It is not involved in the protein synthesizing functions of that subunit. This chain is Large ribosomal subunit protein bL20, found in Leptospira borgpetersenii serovar Hardjo-bovis (strain JB197).